Reading from the N-terminus, the 239-residue chain is Terpene cyclase idtB (239 aa).

5 helical membrane-spanning segments follow: residues 20–40 (MADT…ALMI), 50–70 (CMAL…TIVY), 75–95 (RVEL…MVGA), 113–133 (AGFI…ALAM), and 138–158 (GLAY…GGLF). The N-linked (GlcNAc...) asparagine glycan is linked to Asn-164. A helical transmembrane segment spans residues 197-217 (EVFGWLASPLVLWSLVTFLLA).

This sequence belongs to the paxB family.

The protein localises to the membrane. It functions in the pathway secondary metabolite biosynthesis. Functionally, terpene cyclase; part of the gene cluster that mediates the biosynthesis of paspalitrems, indole-diterpene (IDT) mycotoxins that are potent tremorgens in mammals. The geranylgeranyl diphosphate (GGPP) synthase idtG is proposed to catalyze the first step in IDT biosynthesis via catalysis of a series of iterative condensations of isopentenyl diphosphate (IPP) with dimethylallyl diphosphate (DMAPP), geranyl diphosphate (GPP), and farnesyl diphosphate (FPP), to form GGPP. Condensation of indole-3-glycerol phosphate with GGPP by the prenyltransferase idtC then forms 3-geranylgeranylindole (3-GGI). Epoxidation of the two terminal alkenes of the geranylgeranyl moiety by the FAD-dependent monooxygenase idtM, and cyclization by the terpene cyclase idtB then leads to the production of paspaline. The cytochrome P450 monooxygenase idtP then catalyzes oxidative elimination of the pendant methyl group at C-12 of paspaline and generates the C-10 ketone to yield 13-desoxypaxilline. The cytochrome P450 monooxygenase idtQ may catalyze the C-13 oxidation of 13-desoxypaxilline to afford paxilline. Considering that both paspalicine and paxilline were detected in C.paspali, idtQ also catalyzes the formation of paspalinine from 13-desoxypaxilline via paspalicine as an intermediate. Finally, the alpha-prenyltransferase idtF prenylates paspalinine at the C-20 or the C-21 positions to yield paspalitrems A and C, respectively. The hydroxylation of paspalitrem A at C-32 by a still unknown oxidase affords paspalitrem B. This Claviceps paspali (Rye ergot fungus) protein is Terpene cyclase idtB.